Consider the following 523-residue polypeptide: DNA-directed primase/polymerase protein (523 aa).

Substrate is bound by residues Arg78, 117–119, and 168–172; these read DLE and KFSHH. Mn(2+) is bound by residues Asp117 and Glu119. A disordered region spans residues 203 to 230; the sequence is LKKSNPEAPGENRDDVEGTQAKRRKTEE. Residues 258-261 and Lys267 each bind substrate; that span reads RNFR. 4 residues coordinate Zn(2+): Cys390, His397, Cys417, and Cys422. The Zinc knuckle motif motif lies at 390–423; sequence CHNVKRFHKSNNIIIVVDLKEEVWYQKCHDPECR. The span at 467–477 shows a compositional bias: low complexity; that stretch reads APAESTSTTPS. The interval 467-523 is disordered; it reads APAESTSTTPSEDTEGWGDWPDDPAYLRALQEVEEEEEDEDEEVPDELLLQAVNECE. Composition is skewed to acidic residues over residues 478-488 and 498-512; these read EDTEGWGDWPD and EVEE…EVPD.

Belongs to the eukaryotic-type primase small subunit family. It depends on Mn(2+) as a cofactor.

The protein localises to the nucleus. Its subcellular location is the mitochondrion matrix. It localises to the chromosome. The enzyme catalyses ssDNA + n NTP = ssDNA/pppN(pN)n-1 hybrid + (n-1) diphosphate.. It catalyses the reaction DNA(n) + a 2'-deoxyribonucleoside 5'-triphosphate = DNA(n+1) + diphosphate. DNA primase and DNA polymerase required to tolerate replication-stalling lesions by bypassing them. Required to facilitate mitochondrial and nuclear replication fork progression by initiating de novo DNA synthesis using dNTPs and acting as an error-prone DNA polymerase able to bypass certain DNA lesions. Shows a high capacity to tolerate DNA damage lesions such as 8oxoG and abasic sites in DNA. Provides different translesion synthesis alternatives when DNA replication is stalled: able to synthesize DNA primers downstream of lesions, such as UV lesions, R-loops and G-quadruplexes, to allow DNA replication to continue. Can also realign primers ahead of 'unreadable lesions' such as abasic sites and 6-4 photoproduct (6-4 pyrimidine-pyrimidinone), thereby skipping the lesion. Repriming avoids fork degradation while leading to accumulation of internal ssDNA gaps behind the forks. Also able to incorporate nucleotides opposite DNA lesions such as 8oxoG, like a regular translesion synthesis DNA polymerase. Also required for reinitiating stalled forks after ultraviolet (UV) damage during nuclear DNA replication. Required for mitochondrial DNA (mtDNA) synthesis and replication, by reinitiating synthesis after UV damage or in the presence of chain-terminating nucleotides. In addition to its role in DNA damage response, also required to maintain efficient nuclear and mitochondrial DNA replication in unperturbed cells. In Danio rerio (Zebrafish), this protein is DNA-directed primase/polymerase protein.